Reading from the N-terminus, the 413-residue chain is Multifunctional CCA protein (413 aa).

ATP contacts are provided by glycine 8 and arginine 11. Positions 8 and 11 each coordinate CTP. Mg(2+)-binding residues include aspartate 21 and aspartate 23. Arginine 91, arginine 137, and arginine 140 together coordinate ATP. CTP contacts are provided by arginine 91, arginine 137, and arginine 140. Residues 228–329 (TGVHTLMTLS…VKLFDAIDAW (102 aa)) enclose the HD domain.

The protein belongs to the tRNA nucleotidyltransferase/poly(A) polymerase family. Bacterial CCA-adding enzyme type 1 subfamily. In terms of assembly, monomer. Can also form homodimers and oligomers. Mg(2+) is required as a cofactor. The cofactor is Ni(2+).

The enzyme catalyses a tRNA precursor + 2 CTP + ATP = a tRNA with a 3' CCA end + 3 diphosphate. It carries out the reaction a tRNA with a 3' CCA end + 2 CTP + ATP = a tRNA with a 3' CCACCA end + 3 diphosphate. Its function is as follows. Catalyzes the addition and repair of the essential 3'-terminal CCA sequence in tRNAs without using a nucleic acid template. Adds these three nucleotides in the order of C, C, and A to the tRNA nucleotide-73, using CTP and ATP as substrates and producing inorganic pyrophosphate. tRNA 3'-terminal CCA addition is required both for tRNA processing and repair. Also involved in tRNA surveillance by mediating tandem CCA addition to generate a CCACCA at the 3' terminus of unstable tRNAs. While stable tRNAs receive only 3'-terminal CCA, unstable tRNAs are marked with CCACCA and rapidly degraded. This is Multifunctional CCA protein from Salmonella schwarzengrund (strain CVM19633).